Reading from the N-terminus, the 935-residue chain is Protein HIRA (935 aa).

7 WD repeats span residues 14–58 (HDTG…DKKK), 72–111 (ESQS…NSMG), 131–170 (GHSM…DRIT), 174–213 (DIQL…CVKS), 222–261 (IEET…QTWK), 277–320 (RAMP…KPLF), and 325–362 (IFNH…IGEM). The disordered stretch occupies residues 431 to 556 (SSDIQLTKSM…RNKKRKVPAT (126 aa)). A compositionally biased stretch (basic and acidic residues) spans 439–468 (SMEDNSKENESKNSEKTMMEERNKQIDVRK). Over residues 480-492 (GTTTADPMTSLSS) the composition is skewed to polar residues. Positions 520 to 542 (DLEDSSDSDDDDEEEEEDMEISD) are enriched in acidic residues.

The protein belongs to the WD repeat HIR1 family.

The protein localises to the nucleus. Its function is as follows. Required for replication-independent chromatin assembly and for the periodic repression of histone gene transcription during the cell cycle. In Caenorhabditis elegans, this protein is Protein HIRA.